Consider the following 372-residue polypeptide: NAD(P)H-quinone oxidoreductase subunit 1 (372 aa).

Helical transmembrane passes span 27–47, 97–117, 128–148, 176–196, 204–224, 254–274, 308–328, and 347–367; these read VLWMPLPMLLMIIAATVGVLV, FLFTIGPALVVIPVFLSYLIV, VGAGVFLWIALSSIQPIGLLM, LALAVLAVVMMSNSLSTIDIV, ILGWNIWRQPVGFIIFWIAAL, FALFYVGSYVNLILSALLVSI, ALGITMTVLKAYLLVFTAILL, and FLLPISLVNLLVTAALKLTFP.

This sequence belongs to the complex I subunit 1 family. In terms of assembly, NDH-1 is composed of at least 11 different subunits.

It is found in the cellular thylakoid membrane. The catalysed reaction is a plastoquinone + NADH + (n+1) H(+)(in) = a plastoquinol + NAD(+) + n H(+)(out). It carries out the reaction a plastoquinone + NADPH + (n+1) H(+)(in) = a plastoquinol + NADP(+) + n H(+)(out). NDH-1 shuttles electrons from an unknown electron donor, via FMN and iron-sulfur (Fe-S) centers, to quinones in the respiratory and/or the photosynthetic chain. The immediate electron acceptor for the enzyme in this species is believed to be plastoquinone. Couples the redox reaction to proton translocation, and thus conserves the redox energy in a proton gradient. The sequence is that of NAD(P)H-quinone oxidoreductase subunit 1 from Synechococcus elongatus (strain ATCC 33912 / PCC 7942 / FACHB-805) (Anacystis nidulans R2).